The chain runs to 298 residues: GTP cyclohydrolase FolE2 (298 aa).

Belongs to the GTP cyclohydrolase IV family.

The enzyme catalyses GTP + H2O = 7,8-dihydroneopterin 3'-triphosphate + formate + H(+). It participates in cofactor biosynthesis; 7,8-dihydroneopterin triphosphate biosynthesis; 7,8-dihydroneopterin triphosphate from GTP: step 1/1. Converts GTP to 7,8-dihydroneopterin triphosphate. The protein is GTP cyclohydrolase FolE2 of Pseudomonas aeruginosa (strain UCBPP-PA14).